The sequence spans 314 residues: Acetylglutamate kinase (314 aa).

Residues 76–77, R98, and N199 contribute to the substrate site; that span reads GG.

Belongs to the acetylglutamate kinase family. ArgB subfamily.

The protein localises to the cytoplasm. It carries out the reaction N-acetyl-L-glutamate + ATP = N-acetyl-L-glutamyl 5-phosphate + ADP. It participates in amino-acid biosynthesis; L-arginine biosynthesis; N(2)-acetyl-L-ornithine from L-glutamate: step 2/4. Its function is as follows. Catalyzes the ATP-dependent phosphorylation of N-acetyl-L-glutamate. The polypeptide is Acetylglutamate kinase (Bifidobacterium longum (strain DJO10A)).